The chain runs to 942 residues: MEGDDFTPEGGKLPEFKLDARQAQGFISFFKKLPQDPRAVRLFDRRDYYTAHGENATFIARTYYHTMSALRQLGSSSDGILSASVSKAMFETIARNILLERTDCTLELYEGSGSNWRLTKSGTPGNIGSFEDILFANNDMEDSPVIVALFPACRESQLYVGLSFLDMTNRKLGLAEFPEDSRFTNVESALVALGCKECLLPADCEKSIDLNPLQDVISNCNVLLTEKKKADFKSRDLAQDLGRIIRGSVEPVRDLLSQFDYALGPLGALLSYAELLADDTNYGNYTIEKYNLNCYMRLDSAAVRALNIAEGKTDVNKNFSLFGLMNRTCTVGMGKRLLNRWLKQPLLDVNEINNRLDMVQAFVEDPELRQGLRQQLKRISDIDRLTHSLRKKSANLQPVVKLYQSCSRIPYIKGILQQYNGQFSTLIRSKFLEPLEEWMAKNRFGRFSSLVETAIDLAQLENGEYRISPLYSSDLGVLKDELSVVENHINNLHVDTASDLDLSVDKQLKLEKGSLGHVFRMSKKEEQKVRKKLTGSYLIIETRKDGVKFTNSKLKNLSDQYQALFGEYTSCQKKVVGDVVRVSGTFSEVFENFAAVLSELDVLQSFADLATSCPVPYVRPDITASDEGDIVLLGSRHPCLEAQDGVNFIPNDCTLVRGKSWFQIITGPNMGGKSTFIRQVGVNVLMAQVGSFVPCDQASISVRDCIFARVGAGDCQLHGVSTFMQEMLETASILKGASDKSLIIIDELGRGTSTYDGFGLAWAICEHLMEVTRAPTLFATHFHELTALAHRNDDEHQHISDIGVANYHVGAHIDPLSRKLTMLYKVEPGACDQSFGIHVAEFANFPEAVVALAKSKAAELEDFSTTPTFSDDLKDEVGSKRKRVFSPDDITRGAARARLFLEEFAALPMDEMDGSKILEMATKMKADLQKDAADNPWLQQFF.

Glycine 667–serine 674 contributes to the ATP binding site.

The protein belongs to the DNA mismatch repair MutS family. Heterodimer of MSH2 and MSH6 (GTBP).

The protein localises to the nucleus. Functionally, involved in postreplication mismatch repair. Binds specifically to DNA containing mismatched nucleotides thus providing a target for the excision repair processes characteristic of postreplication mismatch repair. In Zea mays (Maize), this protein is DNA mismatch repair protein MSH2 (MUS1).